The following is a 452-amino-acid chain: tRNA modification GTPase MnmE (452 aa).

(6S)-5-formyl-5,6,7,8-tetrahydrofolate is bound by residues arginine 21, glutamate 78, and lysine 118. Residues 214–375 (GMKVVIAGRP…LREHLKQSMG (162 aa)) enclose the TrmE-type G domain. Residue asparagine 224 coordinates K(+). Residues 224–229 (NAGKSS), 243–249 (TDIAGTT), and 268–271 (DTAG) contribute to the GTP site. A Mg(2+)-binding site is contributed by serine 228. K(+)-binding residues include threonine 243, isoleucine 245, and threonine 248. Position 249 (threonine 249) interacts with Mg(2+). (6S)-5-formyl-5,6,7,8-tetrahydrofolate is bound at residue lysine 452.

Belongs to the TRAFAC class TrmE-Era-EngA-EngB-Septin-like GTPase superfamily. TrmE GTPase family. As to quaternary structure, homodimer. Heterotetramer of two MnmE and two MnmG subunits. Requires K(+) as cofactor.

Its subcellular location is the cytoplasm. Functionally, exhibits a very high intrinsic GTPase hydrolysis rate. Involved in the addition of a carboxymethylaminomethyl (cmnm) group at the wobble position (U34) of certain tRNAs, forming tRNA-cmnm(5)s(2)U34. The sequence is that of tRNA modification GTPase MnmE from Actinobacillus succinogenes (strain ATCC 55618 / DSM 22257 / CCUG 43843 / 130Z).